Here is a 388-residue protein sequence, read N- to C-terminus: Deoxyguanosinetriphosphate triphosphohydrolase-like protein (388 aa).

The tract at residues 1–32 (MSVGMAAPRAPYSCDPDRSRGRLFAEPPSRTR) is disordered. One can recognise an HD domain in the interval 69–205 (RLTHSLEVAQ…AALADDIAYD (137 aa)).

It belongs to the dGTPase family. Type 2 subfamily.

The protein is Deoxyguanosinetriphosphate triphosphohydrolase-like protein of Bradyrhizobium sp. (strain ORS 278).